The sequence spans 179 residues: Large ribosomal subunit protein uL5c (179 aa).

This sequence belongs to the universal ribosomal protein uL5 family. In terms of assembly, part of the 50S ribosomal subunit; contacts the 5S rRNA.

It localises to the plastid. Its function is as follows. Binds 5S rRNA, forms part of the central protuberance of the 50S subunit. The chain is Large ribosomal subunit protein uL5c (rpl5) from Euglena longa (Euglenophycean alga).